A 99-amino-acid chain; its full sequence is DNA-directed RNA polymerase subunit omega (99 aa).

A disordered region spans residues 55-99 (EAGTVISDPNPEEKRERLRIEREERKRQREQEQKELENRLRDEKN). Residues 65-99 (PEEKRERLRIEREERKRQREQEQKELENRLRDEKN) show a composition bias toward basic and acidic residues.

The protein belongs to the RNA polymerase subunit omega family. The RNAP catalytic core consists of 2 alpha, 1 beta, 1 beta' and 1 omega subunit. When a sigma factor is associated with the core the holoenzyme is formed, which can initiate transcription.

It carries out the reaction RNA(n) + a ribonucleoside 5'-triphosphate = RNA(n+1) + diphosphate. Its function is as follows. Promotes RNA polymerase assembly. Latches the N- and C-terminal regions of the beta' subunit thereby facilitating its interaction with the beta and alpha subunits. This Enterococcus faecalis (strain ATCC 700802 / V583) protein is DNA-directed RNA polymerase subunit omega.